We begin with the raw amino-acid sequence, 180 residues long: NAD(P)H-quinone oxidoreductase subunit I, chloroplastic (180 aa).

4Fe-4S ferredoxin-type domains follow at residues 55-84 (GRIH…VDWR) and 95-124 (LNYS…MTEE). Cys64, Cys67, Cys70, Cys74, Cys104, Cys107, Cys110, and Cys114 together coordinate [4Fe-4S] cluster.

This sequence belongs to the complex I 23 kDa subunit family. NDH is composed of at least 16 different subunits, 5 of which are encoded in the nucleus. The cofactor is [4Fe-4S] cluster.

The protein localises to the plastid. The protein resides in the chloroplast thylakoid membrane. The enzyme catalyses a plastoquinone + NADH + (n+1) H(+)(in) = a plastoquinol + NAD(+) + n H(+)(out). The catalysed reaction is a plastoquinone + NADPH + (n+1) H(+)(in) = a plastoquinol + NADP(+) + n H(+)(out). In terms of biological role, NDH shuttles electrons from NAD(P)H:plastoquinone, via FMN and iron-sulfur (Fe-S) centers, to quinones in the photosynthetic chain and possibly in a chloroplast respiratory chain. The immediate electron acceptor for the enzyme in this species is believed to be plastoquinone. Couples the redox reaction to proton translocation, and thus conserves the redox energy in a proton gradient. This Triticum aestivum (Wheat) protein is NAD(P)H-quinone oxidoreductase subunit I, chloroplastic.